We begin with the raw amino-acid sequence, 280 residues long: L-proline cis-4-hydroxylase (280 aa).

Residues histidine 106, aspartate 108, and histidine 154 each contribute to the Fe cation site. 2-oxoglutarate is bound at residue arginine 164.

The protein belongs to the L-proline cis-4-/cis-3-hydroxylase family. Fe(2+) is required as a cofactor.

It carries out the reaction L-proline + 2-oxoglutarate + O2 = cis-4-hydroxy-L-proline + succinate + CO2. Its activity is regulated as follows. Inhibited by metal ions such as Co(2+), Zn(2+), Cu(2+) or Ni(2+). Is also inhibited by EDTA or diethylpyrocarbonate (DEPC) in vitro. Unlike the procollagen-proline cis-3- and trans-4-hydroxylases from mammals, does not necessarily require L-ascorbate for activity although it does increase the activity of the enzyme. Functionally, dioxygenase that catalyzes the 2-oxoglutarate-dependent selective hydroxylation of free L-proline to cis-4-hydroxy-L-proline (cis-4-Hyp). This Mesorhizobium japonicum (strain LMG 29417 / CECT 9101 / MAFF 303099) (Mesorhizobium loti (strain MAFF 303099)) protein is L-proline cis-4-hydroxylase.